The primary structure comprises 984 residues: Serine/threonine-protein kinase N2 (984 aa).

Ser21 bears the Phosphoserine mark. Residues 33–109 form the REM-1 1 domain; the sequence is KLDFSDTMVQ…LQELNAHIVV (77 aa). Lys77 is subject to N6-acetyllysine. The residue at position 110 (Ser110) is a Phosphoserine. A disordered region spans residues 114–133; it reads DITDCPRTPDTPNNDPRCST. 2 positions are modified to phosphothreonine: Thr121 and Thr124. REM-1 domains lie at 121–203 and 204–284; these read TPDT…TNEL and AFDN…EVPK. Residues 123–133 show a composition bias toward polar residues; sequence DTPNNDPRCST. Residues Ser302, Ser306, Ser360, and Ser362 each carry the phosphoserine modification. The tract at residues 351-383 is disordered; the sequence is ATSVALPGWSPSETRSSFMSRTSKSKSGSSRNL. One can recognise a C2 domain in the interval 353–473; sequence SVALPGWSPS…LYLEPQGTLF (121 aa). Positions 364-381 are enriched in low complexity; sequence TRSSFMSRTSKSKSGSSR. A necessary to rescue apical junction formation region spans residues 382–463; sequence NLLKTDDLSN…FLDNQRHGMC (82 aa). 3 positions are modified to phosphoserine: Ser535, Ser583, and Ser620. A disordered region spans residues 558–584; sequence ASDSTVTKLDFDLEPEPPPAPPRASSL. At Thr628 the chain carries Phosphothreonine. Ser631 bears the Phosphoserine mark. Residues 657–916 form the Protein kinase domain; it reads FRCCAVLGRG…AEDVKKHPFF (260 aa). ATP contacts are provided by residues 663 to 671 and Lys686; that span reads LGRGHFGKV. The Proton acceptor role is filled by Asp782. Thr816 bears the Phosphothreonine; by PDPK1 mark. Residues 917–977 form a necessary for the catalytic activity region; sequence RLIDWSALMD…EEEQEMFRDF (61 aa). Residues 917-984 form the AGC-kinase C-terminal domain; the sequence is RLIDWSALMD…RDFDYIADWC (68 aa). Ser952 carries the phosphoserine modification. Thr958 carries the phosphothreonine modification. A negatively regulates the responsiveness of the catalytic activity by cardiolipin and is required for optimal activation by the GTP-bound RhoA region spans residues 978 to 984; the sequence is DYIADWC.

The protein belongs to the protein kinase superfamily. AGC Ser/Thr protein kinase family. PKC subfamily. As to quaternary structure, interacts (via the REM repeats) with RHOA (GTP-bound form preferentially) and interacts (via the REM repeats) with RAC1 (GTP-bound form preferentially); the interactions induce its autophosphorylation. Interacts with RHOC. Interacts with NCK1 and NCK2. Interacts with NCK1 (via SH3 domains). Interacts with CD44. Interacts (via C-terminal kinase domain) with PDPK1; the interaction stimulates PDPK1 kinase activity. Interacts with MAP3K2; the interaction activates PRK2 kinase activity in a MAP3K2-independent kinase activity. Interacts (via C-terminal domain) with AKT1; the interaction occurs with the C-terminal cleavage product of PRK2 in apoptotic cells. Interacts (via C-terminus) with PTPN13 (via PDZ 3 domain). Interacts with CDK10. In terms of assembly, (Microbial infection) Interacts with HCV NS5B (via N-terminal finger domain). In terms of processing, autophosphorylated. Phosphorylated during mitosis. Phosphorylated by CDK10. Post-translationally, activated by limited proteolysis with trypsin. Proteolytically cleaved by caspase-3 during the induction of apoptotic cell death. Ubiquitous. Expressed in numerous tumor cell lines, especially in bladder tumor cells.

The protein resides in the cytoplasm. It is found in the nucleus. The protein localises to the membrane. It localises to the cell projection. Its subcellular location is the lamellipodium. The protein resides in the cytoskeleton. It is found in the cleavage furrow. The protein localises to the midbody. It localises to the cell junction. The catalysed reaction is L-seryl-[protein] + ATP = O-phospho-L-seryl-[protein] + ADP + H(+). It carries out the reaction L-threonyl-[protein] + ATP = O-phospho-L-threonyl-[protein] + ADP + H(+). Its activity is regulated as follows. Kinase activity is activated upon binding to GTP-bound Rhoa/Rac1 GTPases. Activated by caspase-3 (CASP3) cleavage during apoptosis. Activated by lipids, particularly cardiolipin and to a lesser extent by other acidic phospholipids and unsaturated fatty acids. Two specific sites, Thr-816 (activation loop of the kinase domain) and Thr-958 (turn motif), need to be phosphorylated for its full activation. Functionally, PKC-related serine/threonine-protein kinase and Rho/Rac effector protein that participates in specific signal transduction responses in the cell. Plays a role in the regulation of cell cycle progression, actin cytoskeleton assembly, cell migration, cell adhesion, tumor cell invasion and transcription activation signaling processes. Phosphorylates CTTN in hyaluronan-induced astrocytes and hence decreases CTTN ability to associate with filamentous actin. Phosphorylates HDAC5, therefore lead to impair HDAC5 import. Direct RhoA target required for the regulation of the maturation of primordial junctions into apical junction formation in bronchial epithelial cells. Required for G2/M phases of the cell cycle progression and abscission during cytokinesis in a ECT2-dependent manner. Stimulates FYN kinase activity that is required for establishment of skin cell-cell adhesion during keratinocytes differentiation. Regulates epithelial bladder cells speed and direction of movement during cell migration and tumor cell invasion. Inhibits Akt pro-survival-induced kinase activity. Mediates Rho protein-induced transcriptional activation via the c-fos serum response factor (SRF). Involved in the negative regulation of ciliogenesis. Its function is as follows. (Microbial infection) Phosphorylates HCV NS5B leading to stimulation of HCV RNA replication. This Homo sapiens (Human) protein is Serine/threonine-protein kinase N2 (PKN2).